The sequence spans 382 residues: D-galactonate dehydratase (382 aa).

Asp183 contacts Mg(2+). The active-site Proton donor is the His185. Mg(2+) contacts are provided by Glu209 and Glu235. The Proton acceptor role is filled by His285. The tract at residues 361 to 382 (NENPPDWRNPVWRHSDGSIAEW) is disordered.

It belongs to the mandelate racemase/muconate lactonizing enzyme family. GalD subfamily. The cofactor is Mg(2+).

The catalysed reaction is D-galactonate = 2-dehydro-3-deoxy-D-galactonate + H2O. It participates in carbohydrate acid metabolism; D-galactonate degradation; D-glyceraldehyde 3-phosphate and pyruvate from D-galactonate: step 1/3. In terms of biological role, catalyzes the dehydration of D-galactonate to 2-keto-3-deoxy-D-galactonate. The protein is D-galactonate dehydratase of Xanthomonas oryzae pv. oryzae (strain MAFF 311018).